The chain runs to 104 residues: Inclusion membrane protein F (104 aa).

The next 2 helical transmembrane spans lie at 39–59 and 70–90; these read LVVA…SLVA and LAVL…VLFI.

It localises to the secreted. It is found in the host vacuole. The protein localises to the host pathogen-containing vacuole. Its subcellular location is the host pathogen-containing vacuole membrane. Its function is as follows. Inclusion membrane protein probably involved in early modification events of the chlamydial inclusion. In Chlamydia trachomatis serovar L2 (strain ATCC VR-902B / DSM 19102 / 434/Bu), this protein is Inclusion membrane protein F.